A 458-amino-acid chain; its full sequence is Phosphoglucosamine mutase (458 aa).

The active-site Phosphoserine intermediate is Ser-106. The Mg(2+) site is built by Ser-106, Asp-247, Asp-249, and Asp-251. Ser-106 carries the post-translational modification Phosphoserine.

Belongs to the phosphohexose mutase family. It depends on Mg(2+) as a cofactor. Activated by phosphorylation.

It carries out the reaction alpha-D-glucosamine 1-phosphate = D-glucosamine 6-phosphate. Its function is as follows. Catalyzes the conversion of glucosamine-6-phosphate to glucosamine-1-phosphate. The sequence is that of Phosphoglucosamine mutase from Chlamydia felis (strain Fe/C-56) (Chlamydophila felis).